Reading from the N-terminus, the 92-residue chain is Small ribosomal subunit protein uS19c (92 aa).

It belongs to the universal ribosomal protein uS19 family.

Its subcellular location is the plastid. It localises to the chloroplast. In terms of biological role, protein S19 forms a complex with S13 that binds strongly to the 16S ribosomal RNA. This chain is Small ribosomal subunit protein uS19c, found in Chaetosphaeridium globosum (Charophycean green alga).